The primary structure comprises 181 residues: Bifunctional protein PyrR (181 aa).

Substrate is bound by residues 39–40 (RR), 104–112 (DDVLYTGRT), arginine 137, and valine 161. The PRPP-binding motif lies at 100–112 (VILVDDVLYTGRT).

It belongs to the purine/pyrimidine phosphoribosyltransferase family. PyrR subfamily.

The enzyme catalyses UMP + diphosphate = 5-phospho-alpha-D-ribose 1-diphosphate + uracil. In terms of biological role, regulates the transcription of the pyrimidine nucleotide (pyr) operon in response to exogenous pyrimidines. Its function is as follows. Also displays a weak uracil phosphoribosyltransferase activity which is not physiologically significant. The chain is Bifunctional protein PyrR from Pasteurella multocida (strain Pm70).